A 262-amino-acid polypeptide reads, in one-letter code: MAPALLLVPAALASFILAFGTGVEFVRFTSLRPLLGGIPESGGPDARQGWLAALQDRSILAPLAWDLGLLLLFVGQHSLMAAERVKAWTSRYFGVLQRSLYVACTALALQLVMRYWEPIPKGPVLWEARAEPWATWVPLLCFVLHVISWLLIFSILLVFDYAELMGLKQVYYHVLGLGEPLALKSPRALRLFSHLRHPVCVELLTVLWVVPTLGTDRLLLAFLLTLYLGLAHGLDQQDLRYLRAQLQRKLHLLSRPQDGEAE.

Residues 1–4 (MAPA) lie on the Nuclear side of the membrane. The helical transmembrane segment at 5-28 (LLLVPAALASFILAFGTGVEFVRF) threads the bilayer. At 29–58 (TSLRPLLGGIPESGGPDARQGWLAALQDRS) the chain is on the perinuclear space side. A helical membrane pass occupies residues 59 to 80 (ILAPLAWDLGLLLLFVGQHSLM). Topologically, residues 81–97 (AAERVKAWTSRYFGVLQ) are nuclear. Residues 98-114 (RSLYVACTALALQLVMR) form a helical membrane-spanning segment. The Perinuclear space portion of the chain corresponds to 115-133 (YWEPIPKGPVLWEARAEPW). A helical transmembrane segment spans residues 134–164 (ATWVPLLCFVLHVISWLLIFSILLVFDYAEL). At 165–191 (MGLKQVYYHVLGLGEPLALKSPRALRL) the chain is on the nuclear side. The chain crosses the membrane as a helical span at residues 192 to 210 (FSHLRHPVCVELLTVLWVV). Residues 211–216 (PTLGTD) are Perinuclear space-facing. The chain crosses the membrane as a helical span at residues 217 to 234 (RLLLAFLLTLYLGLAHGL). Residues 235 to 262 (DQQDLRYLRAQLQRKLHLLSRPQDGEAE) lie on the Nuclear side of the membrane.

The protein belongs to the nurim family.

The protein resides in the nucleus inner membrane. The protein is Nurim (NRM) of Pan troglodytes (Chimpanzee).